A 361-amino-acid chain; its full sequence is Histidinol-phosphate aminotransferase (361 aa).

K219 carries the N6-(pyridoxal phosphate)lysine modification.

This sequence belongs to the class-II pyridoxal-phosphate-dependent aminotransferase family. Histidinol-phosphate aminotransferase subfamily. Homodimer. The cofactor is pyridoxal 5'-phosphate.

The catalysed reaction is L-histidinol phosphate + 2-oxoglutarate = 3-(imidazol-4-yl)-2-oxopropyl phosphate + L-glutamate. It participates in amino-acid biosynthesis; L-histidine biosynthesis; L-histidine from 5-phospho-alpha-D-ribose 1-diphosphate: step 7/9. The polypeptide is Histidinol-phosphate aminotransferase (Acinetobacter baumannii (strain ATCC 17978 / DSM 105126 / CIP 53.77 / LMG 1025 / NCDC KC755 / 5377)).